The primary structure comprises 262 residues: MGRKVHPIGFRLGYIKDWQSKWFAERNYTELLHEDVMLRKIIAKELENAGVARIEIERSANKVEVTVYTAKPGIVIGKRGAKVDELRAELEKRTGKKVKLNIQEIHQPELEAQLVAESIAEQINKRVSYKRAMKQAVQRAMRLGAQGVKIKCSGRLAGAEMARVAWERDGRVPLHTLRADIDYAQVHAHTTYGRIGVKVWIYKGEVFPDQKGQTQLPQPAVAAARPGLTVEEEERPQRKGGRGGRGANAGAARGGRGGRSRS.

Positions 38 to 106 constitute a KH type-2 domain; that stretch reads LRKIIAKELE…KVKLNIQEIH (69 aa). A disordered region spans residues 211-262; that stretch reads KGQTQLPQPAVAAARPGLTVEEEERPQRKGGRGGRGANAGAARGGRGGRSRS. Over residues 243-255 the composition is skewed to gly residues; that stretch reads GGRGANAGAARGG.

The protein belongs to the universal ribosomal protein uS3 family. As to quaternary structure, part of the 30S ribosomal subunit. Forms a tight complex with proteins S10 and S14.

Binds the lower part of the 30S subunit head. Binds mRNA in the 70S ribosome, positioning it for translation. The chain is Small ribosomal subunit protein uS3 from Roseiflexus sp. (strain RS-1).